The following is a 547-amino-acid chain: Delta-guaiene synthase 1 (547 aa).

Mg(2+)-binding residues include Asp299, Asp303, and Asp444. The DDXXD motif signature appears at 299-303; the sequence is DDTYD.

Belongs to the terpene synthase family. Requires Mg(2+) as cofactor.

It catalyses the reaction (2E,6E)-farnesyl diphosphate = delta-guaiene + diphosphate. The enzyme catalyses (2E,6E)-farnesyl diphosphate = alpha-guaiene + diphosphate. The protein operates within secondary metabolite biosynthesis; terpenoid biosynthesis. In terms of biological role, sesquiterpene synthase involved in the biosynthesis of delta-guaiene (81.2%) and alpha-guaiene (18.1%), two structures composed of five- and seven-membered rings. Also produces 0.7% of alpha-humulene. In Aquilaria crassna (Eagle wood), this protein is Delta-guaiene synthase 1 (C2).